Here is a 658-residue protein sequence, read N- to C-terminus: Probable mitochondrial Rho GTPase gemA (658 aa).

Residues 1 to 633 (MKNNIKVILI…NGSNGSNNSN (633 aa)) lie on the Cytoplasmic side of the membrane. A Miro 1 domain is found at 2-175 (KNNIKVILIG…LYASQTSVFF (174 aa)). Residues 11–18 (GDEQVGKS), 57–62 (DTFDDG), and 118–121 (NKLD) contribute to the GTP site. EF-hand domains are found at residues 191-226 (GCER…CGHE) and 311-346 (MGNE…TPKI). Positions 204, 206, 208, 210, 215, 324, 326, 328, and 335 each coordinate Ca(2+). Residues 420–616 (RNIVNCYVFG…YHEMMETIVN (197 aa)) enclose the Miro 2 domain. GTP-binding positions include 429-436 (GAEAVGKT), 466-468 (LLK), and 530-533 (TKNN). Residues 532-575 (NNNNNNNNNNNNNNNNNNNNLNNNNNNINNNNNNNNNNTTTTNA) form a disordered region. A helical; Anchor for type IV membrane protein transmembrane segment spans residues 634 to 656 (ILTYLVIAAGVAGVGLLLSKYLA). Over 657-658 (KK) the chain is Mitochondrial intermembrane.

It belongs to the mitochondrial Rho GTPase family.

It localises to the mitochondrion outer membrane. In terms of biological role, mitochondrial GTPase involved in mitochondrial trafficking. Probably involved in control of anterograde transport of mitochondria and their subcellular distribution. In Dictyostelium discoideum (Social amoeba), this protein is Probable mitochondrial Rho GTPase gemA (gemA).